Here is a 727-residue protein sequence, read N- to C-terminus: C-terminal-binding protein 1 (727 aa).

The THAP-type zinc-finger motif lies at 5–60 (CGFPNCKFRSRYRGLEDNRHFYRIPKRPLILRQRWLTAIGRTEETVVSQLRICSAH). Residues 64-158 (GEKKEGDIPV…HPPVLPDPQQ (95 aa)) are disordered. The span at 77 to 94 (TVDKQIKIELPPKESKNS) shows a compositional bias: basic and acidic residues. NAD(+) is bound by residues Y251, 331 to 336 (LGCGRV), D355, 388 to 394 (CNLGDET), 415 to 417 (TSH), D441, and 467 to 470 (HSAW). The segment covering 587–613 (ANAQRGSPANRSSRSSPSPHTNKSSVS) has biased composition (low complexity). 2 disordered regions span residues 587 to 629 (ANAQ…SPAA) and 652 to 681 (APNG…GDEN).

This sequence belongs to the D-isomer specific 2-hydroxyacid dehydrogenase family. Homodimer.

Functionally, binds DNA and represses gene expression. Plays a role in regulation of life span, possibly by regulating transcription of genes important for lipid metabolism. The protein is C-terminal-binding protein 1 of Caenorhabditis elegans.